Reading from the N-terminus, the 197-residue chain is Nucleoside triphosphate pyrophosphatase (197 aa).

The active-site Proton acceptor is Asp-75.

This sequence belongs to the Maf family. A divalent metal cation serves as cofactor.

The protein localises to the cytoplasm. The enzyme catalyses a ribonucleoside 5'-triphosphate + H2O = a ribonucleoside 5'-phosphate + diphosphate + H(+). The catalysed reaction is a 2'-deoxyribonucleoside 5'-triphosphate + H2O = a 2'-deoxyribonucleoside 5'-phosphate + diphosphate + H(+). Nucleoside triphosphate pyrophosphatase. May have a dual role in cell division arrest and in preventing the incorporation of modified nucleotides into cellular nucleic acids. The sequence is that of Nucleoside triphosphate pyrophosphatase from Haemophilus ducreyi (strain 35000HP / ATCC 700724).